The primary structure comprises 157 residues: Serine-protein kinase RsbW (157 aa).

The protein belongs to the anti-sigma-factor family.

It catalyses the reaction L-seryl-[protein] + ATP = O-phospho-L-seryl-[protein] + ADP + H(+). The enzyme catalyses L-threonyl-[protein] + ATP = O-phospho-L-threonyl-[protein] + ADP + H(+). In terms of biological role, negative regulator of sigma-B activity. Phosphorylates and inactivates its specific antagonist protein, RsbV. Upon phosphorylation of RsbV, RsbW is released and binds to sigma-B, thereby blocking its ability to form an RNA polymerase holoenzyme (E-sigma-B). This is Serine-protein kinase RsbW from Listeria monocytogenes serovar 1/2a (strain ATCC BAA-679 / EGD-e).